A 241-amino-acid chain; its full sequence is Glucosamine-6-phosphate deaminase (241 aa).

Aspartate 67 functions as the Proton acceptor; for enolization step in the catalytic mechanism. Catalysis depends on asparagine 136, which acts as the For ring-opening step. The Proton acceptor; for ring-opening step role is filled by histidine 138. Glutamate 143 (for ring-opening step) is an active-site residue.

Belongs to the glucosamine/galactosamine-6-phosphate isomerase family. NagB subfamily.

The catalysed reaction is alpha-D-glucosamine 6-phosphate + H2O = beta-D-fructose 6-phosphate + NH4(+). The protein operates within amino-sugar metabolism; N-acetylneuraminate degradation; D-fructose 6-phosphate from N-acetylneuraminate: step 5/5. Catalyzes the reversible isomerization-deamination of glucosamine 6-phosphate (GlcN6P) to form fructose 6-phosphate (Fru6P) and ammonium ion. The chain is Glucosamine-6-phosphate deaminase from Halothermothrix orenii (strain H 168 / OCM 544 / DSM 9562).